The sequence spans 745 residues: Probable GMP synthase [glutamine-hydrolyzing] (745 aa).

The disordered stretch occupies residues 1-37 (MKRSSSMLDINEDSQHSTNKAPPPKKAPEDRFDSANM). Residues 60–252 (RIAILDFGAQ…LFKVVGCCGN (193 aa)) enclose the Glutamine amidotransferase type-1 domain. The For GATase activity role is filled by Cys138. Active-site residues include His226 and Glu228. Residues 253-461 (FTIQNREQSC…LGLPESIVQR (209 aa)) form the GMPS ATP-PPase domain. Position 280–286 (280–286 (SGGVDSA)) interacts with ATP. Substrate-binding residues include Arg363, Asp563, Gln662, Lys737, and Glu743.

Homodimer.

It catalyses the reaction XMP + L-glutamine + ATP + H2O = GMP + L-glutamate + AMP + diphosphate + 2 H(+). Its pathway is purine metabolism; GMP biosynthesis; GMP from XMP (L-Gln route): step 1/1. The chain is Probable GMP synthase [glutamine-hydrolyzing] (gmps-1) from Caenorhabditis elegans.